The following is a 198-amino-acid chain: Glycerol-3-phosphate acyltransferase (198 aa).

5 helical membrane-spanning segments follow: residues 5-25 (LILL…LWIG), 56-76 (SIVT…PFFF), 84-104 (FWLL…FAGF), 114-134 (AGVI…VFLV), and 158-178 (LFMG…FVIW).

The protein belongs to the PlsY family. In terms of assembly, probably interacts with PlsX.

The protein localises to the cell membrane. It carries out the reaction an acyl phosphate + sn-glycerol 3-phosphate = a 1-acyl-sn-glycero-3-phosphate + phosphate. The protein operates within lipid metabolism; phospholipid metabolism. Functionally, catalyzes the transfer of an acyl group from acyl-phosphate (acyl-PO(4)) to glycerol-3-phosphate (G3P) to form lysophosphatidic acid (LPA). This enzyme utilizes acyl-phosphate as fatty acyl donor, but not acyl-CoA or acyl-ACP. This Listeria monocytogenes serotype 4b (strain CLIP80459) protein is Glycerol-3-phosphate acyltransferase.